The primary structure comprises 403 residues: 4,4'-dithiodibutanoate disulfide reductase (403 aa).

Gln-103 provides a ligand contact to FMN. Tyr-173 serves as the catalytic Proton donor. FMN is bound at residue 348 to 349 (AR).

It belongs to the NADH:flavin oxidoreductase/NADH oxidase family. FMN serves as cofactor.

The enzyme catalyses 2 4-sulfanylbutanoate + NAD(+) = 4,4'-disulfanyldibutanoate + NADH + H(+). Inactivated by cobalt, nickel and zinc ions. Functionally, involved in the degradation of the organic disulfide 4,4'-dithiodibutyric acid (DTDB). Catalyzes the initial cleavage of DTDB into 2 molecules of 4-mercaptobutyric acid (4MB). Low activities are observed with other disulfide compounds, such as 3,3'-dithiodipropionic acid DTDP, 3,3'-thiodipropionic acid TDP and DTNB. This Rhodococcus erythropolis (Arthrobacter picolinophilus) protein is 4,4'-dithiodibutanoate disulfide reductase.